A 239-amino-acid chain; its full sequence is MARLGVNIDHVATLRQARGGTEPDPVAAAAIAEFAGADGITIHLREDRRHIQDRDLKILRQTVQTRLNLEMAATDEMVAIALSVKPEACTLVPEKRAELTTEGGLDVRIHQEALKLAIEKLQAGGIIVSLFIDPDPDQIKVANKIGADYIEIHTGSFAEAKSWKEEELELIKIENAVKLARKLDLGVNAGHGLNYNNVKKVAAIGGIEEFNIGHSIMSRAILVGLDRAVRDMSELVRYA.

Position 7 (N7) interacts with 3-amino-2-oxopropyl phosphate. Residue 9 to 10 participates in 1-deoxy-D-xylulose 5-phosphate binding; that stretch reads DH. R18 contributes to the 3-amino-2-oxopropyl phosphate binding site. Residue H43 is the Proton acceptor of the active site. Residues R45 and H50 each contribute to the 1-deoxy-D-xylulose 5-phosphate site. E70 (proton acceptor) is an active-site residue. 1-deoxy-D-xylulose 5-phosphate is bound at residue T100. H191 (proton donor) is an active-site residue. 3-amino-2-oxopropyl phosphate-binding positions include G192 and 213-214; that span reads GH.

It belongs to the PNP synthase family. In terms of assembly, homooctamer; tetramer of dimers.

The protein localises to the cytoplasm. It carries out the reaction 3-amino-2-oxopropyl phosphate + 1-deoxy-D-xylulose 5-phosphate = pyridoxine 5'-phosphate + phosphate + 2 H2O + H(+). It functions in the pathway cofactor biosynthesis; pyridoxine 5'-phosphate biosynthesis; pyridoxine 5'-phosphate from D-erythrose 4-phosphate: step 5/5. In terms of biological role, catalyzes the complicated ring closure reaction between the two acyclic compounds 1-deoxy-D-xylulose-5-phosphate (DXP) and 3-amino-2-oxopropyl phosphate (1-amino-acetone-3-phosphate or AAP) to form pyridoxine 5'-phosphate (PNP) and inorganic phosphate. The sequence is that of Pyridoxine 5'-phosphate synthase from Geobacter sp. (strain M21).